Reading from the N-terminus, the 304-residue chain is CD-NTase-associated protein 6 (304 aa).

75 to 80 lines the ATP pocket; it reads GTGKTS.

The protein belongs to the AAA ATPase family. In terms of assembly, oligomerizes. Homohexamer. Forms a 1:1:6 CdnD:Cap7:Cap6 complex.

Functionally, regulates complex assembly in a CBASS antivirus system. CBASS (cyclic oligonucleotide-based antiphage signaling system) provides immunity against bacteriophage. The CD-NTase protein synthesizes cyclic nucleotides in response to infection; these serve as specific second messenger signals. The signals activate a diverse range of effectors, leading to bacterial cell death and thus abortive phage infection. A type III-C(AAA) CBASS system. Its function is as follows. Prevents the CdnD:Cap7:Cap8 complex (also called CdnD:HORMA2:HORMA3) from synthesizing 2',3',3'-cyclic AMP-AMP-AMP (cAAA). Binds and disassembles an active CdnD:Cap7:Cap8 complex, inhibiting the complex's ability to synthesize cyclic nucleotide second messengers. An AAA+-ATPase remodeler, in the absence of foreign threat Cap6 probably maintains the Cap7 protein in an open, inactive state. Once activated (presumably by a bacteriophage protein) Cap7 binds to and activates its cognate CD-NTase (CdnD in this bacteria) to synthesize cAAA, a cyclic nucleotide second messenger. cAAA activates the NucC endonuclease which degrades all DNA in the infected cell, causing cell death and abortive phage infection. In Pseudomonas aeruginosa, this protein is CD-NTase-associated protein 6.